We begin with the raw amino-acid sequence, 461 residues long: Phosphomethylpyrimidine synthase (461 aa).

Residues asparagine 80, methionine 109, tyrosine 139, histidine 174, 194–196 (SRG), 235–238 (DSLR), and glutamate 274 contribute to the substrate site. Residue histidine 278 participates in Zn(2+) binding. Substrate is bound at residue tyrosine 301. Histidine 342 is a Zn(2+) binding site. [4Fe-4S] cluster is bound by residues cysteine 422, cysteine 425, and cysteine 430.

It belongs to the ThiC family. Homodimer. [4Fe-4S] cluster is required as a cofactor.

It catalyses the reaction 5-amino-1-(5-phospho-beta-D-ribosyl)imidazole + S-adenosyl-L-methionine = 4-amino-2-methyl-5-(phosphooxymethyl)pyrimidine + CO + 5'-deoxyadenosine + formate + L-methionine + 3 H(+). It participates in cofactor biosynthesis; thiamine diphosphate biosynthesis. Functionally, catalyzes the synthesis of the hydroxymethylpyrimidine phosphate (HMP-P) moiety of thiamine from aminoimidazole ribotide (AIR) in a radical S-adenosyl-L-methionine (SAM)-dependent reaction. This chain is Phosphomethylpyrimidine synthase, found in Nautilia profundicola (strain ATCC BAA-1463 / DSM 18972 / AmH).